A 530-amino-acid chain; its full sequence is GH3 domain-containing protein (530 aa).

The signal sequence occupies residues 1–17 (MLLWPLLLLLLLLPTLA). A disordered region spans residues 99 to 122 (LTKASQTQQEDSGEQPLPPTSNQD). Residue N450 is glycosylated (N-linked (GlcNAc...) asparagine). An N5-methylglutamine modification is found at Q489.

This sequence belongs to the GH3 family. In terms of processing, methylated at Gln-489 by N6AMT1.

The protein resides in the endoplasmic reticulum. The protein localises to the nucleus envelope. The chain is GH3 domain-containing protein (GHDC) from Homo sapiens (Human).